We begin with the raw amino-acid sequence, 157 residues long: Protein Smg (157 aa).

It belongs to the Smg family.

The chain is Protein Smg from Klebsiella pneumoniae (strain 342).